The following is a 537-amino-acid chain: Cytochrome P450 86A8 (537 aa).

A helical transmembrane segment spans residues 3–23 (ISTALMILSAITAYFLWLTFI). A heme-binding site is contributed by cysteine 458.

It belongs to the cytochrome P450 family. It depends on heme as a cofactor. As to expression, expressed in leaves, stems, flowers and siliques. Expressed at low levels in roots.

It localises to the membrane. The catalysed reaction is an organic molecule + reduced [NADPH--hemoprotein reductase] + O2 = an alcohol + oxidized [NADPH--hemoprotein reductase] + H2O + H(+). Its function is as follows. Catalyzes the omega-hydroxylation of various fatty acids (FA). Acts on saturated and unsaturated fatty acids with chain lengths from C12 to C18. May be involved in the biosynthesis of cutin in the epidermis which prevents post-genital organ fusions. Hydroxylated FAs may be important for trichome differentiation, establishment of apical dominance and senescence. The polypeptide is Cytochrome P450 86A8 (CYP86A8) (Arabidopsis thaliana (Mouse-ear cress)).